Consider the following 48-residue polypeptide: Large ribosomal subunit protein bL33A (48 aa).

It belongs to the bacterial ribosomal protein bL33 family.

This Bacillus anthracis protein is Large ribosomal subunit protein bL33A.